Reading from the N-terminus, the 972-residue chain is Macrophage colony-stimulating factor 1 receptor (972 aa).

Positions 1–19 (MGPGVLLLLLVATAWHGQG) are cleaved as a signal peptide. The Extracellular segment spans residues 20–517 (IPVIEPSVPE…HPPDEFLFTP (498 aa)). Ig-like C2-type domains follow at residues 21–104 (PVIE…VKDP), 107–197 (PWNV…KVQK), 203–290 (PALT…HSTS), 299–399 (AYLN…LTLR), and 402–502 (PEVS…IPIS). 3 disulfides stabilise this stretch: Cys42–Cys84, Cys127–Cys177, and Cys224–Cys278. N-linked (GlcNAc...) asparagine glycosylation is found at Asn45, Asn73, Asn153, Asn240, Asn275, Asn302, Asn335, Asn353, Asn412, Asn428, and Asn480. Residues Cys419 and Cys485 are joined by a disulfide bond. Residues 518-538 (VVVACMSIMALLLLLLLLLLY) form a helical membrane-spanning segment. Residues 539–972 (KYKQKPKYQV…LLQPNNYQFC (434 aa)) lie on the Cytoplasmic side of the membrane. Residues 542 to 574 (QKPKYQVRWKIIESYEGNSYTFIDPTQLPYNEK) form a regulatory juxtamembrane domain region. 2 positions are modified to phosphotyrosine; by autocatalysis: Tyr546 and Tyr561. One can recognise a Protein kinase domain in the interval 582 to 910 (LQFGKTLGAG…PTFQQICSFL (329 aa)). ATP is bound by residues 588-596 (LGAGAFGKV) and Lys616. Tyr699 and Tyr708 each carry phosphotyrosine; by autocatalysis. Position 713 is a phosphoserine (Ser713). Tyr723 carries the phosphotyrosine; by autocatalysis modification. Residue Asp778 is the Proton acceptor of the active site. An activation loop region spans residues 796–818 (DFGLARDIMNDSNYIVKGNARLP). 2 positions are modified to phosphotyrosine; by autocatalysis: Tyr809 and Tyr923. The tract at residues 918 to 950 (RRERDYTNLPSSSRSGGSGSSSSELEEESSSEH) is disordered. The segment covering 928–940 (SSSRSGGSGSSSS) has biased composition (low complexity). Position 969 is a phosphotyrosine; by autocatalysis (Tyr969).

This sequence belongs to the protein kinase superfamily. Tyr protein kinase family. CSF-1/PDGF receptor subfamily. Interacts with INPPL1/SHIP2 and THOC5. Monomer. Homodimer. Interacts with CSF1 and IL34. Interaction with dimeric CSF1 or IL34 leads to receptor homodimerization. Interacts (tyrosine phosphorylated) with PLCG2 (via SH2 domain). Interacts (tyrosine phosphorylated) with PIK3R1 (via SH2 domain). Interacts (tyrosine phosphorylated) with FYN, YES1 and SRC (via SH2 domain). Interacts (tyrosine phosphorylated) with CBL, GRB2 and SLA2. Autophosphorylated in response to CSF1 or IL34 binding. Phosphorylation at Tyr-561 is important for normal down-regulation of signaling by ubiquitination, internalization and degradation. Phosphorylation at Tyr-561 and Tyr-809 is important for interaction with SRC family members, including FYN, YES1 and SRC, and for subsequent activation of these protein kinases. Phosphorylation at Tyr-699 and Tyr-923 is important for interaction with GRB2. Phosphorylation at Tyr-723 is important for interaction with PIK3R1. Phosphorylation at Tyr-708 is important for normal receptor degradation. Phosphorylation at Tyr-723 and Tyr-809 is important for interaction with PLCG2. Phosphorylation at Tyr-969 is important for interaction with CBL. Dephosphorylation by PTPN2 negatively regulates downstream signaling and macrophage differentiation. Post-translationally, ubiquitinated. Becomes rapidly polyubiquitinated after autophosphorylation, leading to its degradation. In terms of tissue distribution, expressed in bone marrow and in differentiated blood mononuclear cells.

It is found in the cell membrane. It carries out the reaction L-tyrosyl-[protein] + ATP = O-phospho-L-tyrosyl-[protein] + ADP + H(+). Present in an inactive conformation in the absence of bound ligand. CSF1 or IL34 binding leads to dimerization and activation by autophosphorylation on tyrosine residues. Inhibited by imatinib/STI-571 (Gleevec), dasatinib, sunitinib/SU11248, lestaurtinib/CEP-701, midostaurin/PKC-412, Ki20227, linifanib/ABT-869, Axitinib/AG013736, sorafenib/BAY 43-9006 and GW2580. In terms of biological role, tyrosine-protein kinase that acts as a cell-surface receptor for CSF1 and IL34 and plays an essential role in the regulation of survival, proliferation and differentiation of hematopoietic precursor cells, especially mononuclear phagocytes, such as macrophages and monocytes. Promotes the release of pro-inflammatory chemokines in response to IL34 and CSF1, and thereby plays an important role in innate immunity and in inflammatory processes. Plays an important role in the regulation of osteoclast proliferation and differentiation, the regulation of bone resorption, and is required for normal bone and tooth development. Required for normal male and female fertility, and for normal development of milk ducts and acinar structures in the mammary gland during pregnancy. Promotes reorganization of the actin cytoskeleton, regulates formation of membrane ruffles, cell adhesion and cell migration, and promotes cancer cell invasion. Activates several signaling pathways in response to ligand binding, including the ERK1/2 and the JNK pathway. Phosphorylates PIK3R1, PLCG2, GRB2, SLA2 and CBL. Activation of PLCG2 leads to the production of the cellular signaling molecules diacylglycerol and inositol 1,4,5-trisphosphate, that then lead to the activation of protein kinase C family members, especially PRKCD. Phosphorylation of PIK3R1, the regulatory subunit of phosphatidylinositol 3-kinase, leads to activation of the AKT1 signaling pathway. Activated CSF1R also mediates activation of the MAP kinases MAPK1/ERK2 and/or MAPK3/ERK1, and of the SRC family kinases SRC, FYN and YES1. Activated CSF1R transmits signals both via proteins that directly interact with phosphorylated tyrosine residues in its intracellular domain, or via adapter proteins, such as GRB2. Promotes activation of STAT family members STAT3, STAT5A and/or STAT5B. Promotes tyrosine phosphorylation of SHC1 and INPP5D/SHIP-1. Receptor signaling is down-regulated by protein phosphatases, such as INPP5D/SHIP-1, that dephosphorylate the receptor and its downstream effectors, and by rapid internalization of the activated receptor. In the central nervous system, may play a role in the development of microglia macrophages. The protein is Macrophage colony-stimulating factor 1 receptor (CSF1R) of Homo sapiens (Human).